We begin with the raw amino-acid sequence, 145 residues long: Monooxygenase AacuP (145 aa).

This sequence belongs to the avfA family.

It functions in the pathway secondary metabolite biosynthesis. Functionally, monooxygenase; part of the gene cluster that mediates the biosynthesis of the tetrahydroxanthone dimer secalonic acid D. The pathway begins with the synthesis of atrochrysone thioester by the polyketide synthase AacuL. The atrochrysone carboxyl ACP thioesterase AacuM then breaks the thioester bond and releases the atrochrysone carboxylic acid from AacuL. Atrochrysone carboxylic acid is decarboxylated by the decarboxylase AacuI, and oxidized by the anthrone oxygenase AacuG to yield emodin. Emodin is then reduced to emodin hydroquinone by a yet unidentified oxidoreductase. A-ring reduction by the short chain dehydrogenase AacuN, dehydration by the scytalone dehydratase-like protein AacuK and probable spontaneous re-oxidation, results in overall deoxygenation to chrysophanol. Baeyer-Villiger oxidation by the Baeyer-Villiger monooxygenase (BVMO) AacuH then yields monodictyphenone. Monodictyphenone is transformed into compounds with the tetrahydroxanthone skeleton via methylesterification by the methyltransferase AacuQ, followed by the action of the flavin-dependent monooxygenase AacuC, the isomerase AacuP, and the short chain dehydrogenase/reductase AacuF or AacuD. AacuF and AacuD should accept the same compound as a substrate but perform the ketoreduction with a different stereoselectivity, thus yielding blennolides B and A, respectively. In the final step of the biosynthesis, the cytochrome P450 monooxygenase AacuE accepts blennolide B and/or blennolide A to conduct the dimerization reaction to furnish the tetrahydroxanthone dimers, secalonic acids D, B, and F. In Aspergillus aculeatus (strain ATCC 16872 / CBS 172.66 / WB 5094), this protein is Monooxygenase AacuP.